Reading from the N-terminus, the 95-residue chain is Co-chaperonin GroES (95 aa).

Belongs to the GroES chaperonin family. In terms of assembly, heptamer of 7 subunits arranged in a ring. Interacts with the chaperonin GroEL.

The protein localises to the cytoplasm. Together with the chaperonin GroEL, plays an essential role in assisting protein folding. The GroEL-GroES system forms a nano-cage that allows encapsulation of the non-native substrate proteins and provides a physical environment optimized to promote and accelerate protein folding. GroES binds to the apical surface of the GroEL ring, thereby capping the opening of the GroEL channel. In Staphylococcus haemolyticus (strain JCSC1435), this protein is Co-chaperonin GroES.